The sequence spans 973 residues: MVKKRVHELAKELKIESKEIINRLNQMGINVKSHMSTLEDGVVERLHQLYRPDQEEVKPAAAKPPAAGQTIKPEEVAPQAQPESRKKDAAMLDSQKPDRDRVQKNGRERAGKATRADHYKGAGLVERVPSRPPDRRFQERPKQSDKARPWGQPRADQGARLKTADFVQERTRSARAGQDYSQPEKVQQERVQDRQQKERPPFEKAQQPRPQHEHKPQDSVKERPHPERASREADNAKRAERLDKGAGKTAEIAYKSGLKALEKAQVGTKPQRAGERGARPGGLHETKPKKNLAPGDAGYAKLWQEQTPVIPQKLLDDRRRQTEEKVKVTEKQKQQAKSQKLVKSREKRNAMAELAEERLRPRPAVAGSRKKGAAKPQEQAQKPAQPLEKKPIVLGESTTVQELALKMHKSPAELIKKLMQLGVMATINQEIDTDTATILAGEFGYEVEVKLPVDIEAMLMQEPEDDPVSLQDRPCVVTVMGHVDHGKTSLLDAIRETNVTATEAGGITQHIGAYQVEHNGKKITFLDTPGHEAFTAMRARGARVTDIAILVVAADDGVMPQTVEAINHAKEAKVPIIVAINKIDKPGANPDRVKQQLTEHGLVAEEWGGDTICVNVSALKKEGLKDLLEMILLVAEMSELKANPNRPARGTVIEAELDKGRGPVANVLVQNGTLNVGDTLIAGAAFGRVRAMMDDKGRRIKKAGPSTPVEVLGFSEVPQAGDIFVVVEDEKLARTIVARRQARKREEELKSTARVSLADLFKHIQEGQIKELGIIIKADVQGSVEALRQALERLSTDEVRVNIIHGGVGAITETDVMLASASNAIIIGFNVRPDVNARKAAENEKVDVRLYRVIYDAIEDVKAAMSGLLEPEYREVTLGRAEIRKIFRSSKIGNIAGCYVLEGKIERDASVRVIRDGIVVHEGKLESLKRFKDDVREVVQGYECGIALEKFNEIQEGDIIEAFTVEAIKRQLT.

Positions 52 to 388 are disordered; sequence PDQEEVKPAA…QAQKPAQPLE (337 aa). 8 stretches are compositionally biased toward basic and acidic residues: residues 83 to 120, 128 to 148, 157 to 172, 186 to 202, 210 to 246, 272 to 288, 314 to 333, and 343 to 360; these read ESRK…DHYK, VPSR…DKAR, QGAR…ERTR, VQQE…RPPF, PQHE…DKGA, RAGE…ETKP, LLDD…EKQK, and KSRE…ERLR. Over residues 374 to 386 the composition is skewed to low complexity; the sequence is AKPQEQAQKPAQP. Residues 472 to 641 enclose the tr-type G domain; it reads DRPCVVTVMG…LLVAEMSELK (170 aa). Residues 481 to 488 form a G1 region; sequence GHVDHGKT. 481–488 serves as a coordination point for GTP; that stretch reads GHVDHGKT. The segment at 506 to 510 is G2; sequence GITQH. Residues 527 to 530 form a G3 region; it reads DTPG. Residues 527–531 and 581–584 contribute to the GTP site; these read DTPGH and NKID. Residues 581 to 584 form a G4 region; it reads NKID. A G5 region spans residues 617–619; sequence SAL.

This sequence belongs to the TRAFAC class translation factor GTPase superfamily. Classic translation factor GTPase family. IF-2 subfamily.

It is found in the cytoplasm. One of the essential components for the initiation of protein synthesis. Protects formylmethionyl-tRNA from spontaneous hydrolysis and promotes its binding to the 30S ribosomal subunits. Also involved in the hydrolysis of GTP during the formation of the 70S ribosomal complex. This chain is Translation initiation factor IF-2, found in Pelotomaculum thermopropionicum (strain DSM 13744 / JCM 10971 / SI).